Reading from the N-terminus, the 850-residue chain is Pentatricopeptide repeat-containing protein At3g49170, chloroplastic (850 aa).

A chloroplast-targeting transit peptide spans 1-50 (MAMISFSFPSPAKLPIKSQPSVSNRINVADRLILRHLNAGDLRGAVSALD). PPR repeat units follow at residues 61-95 (DSVT…DIEP), 96-130 (DSVL…GKRD), 131-164 (VVSW…GLVP), 165-199 (NDYC…GHFE), 201-232 (DVCV…MSEL), 233-267 (NVVT…GFES), 268-302 (DKFT…GLVD), 303-334 (DVEC…MEDH), 335-370 (SVMS…GHVE), 372-406 (NHFT…GLAS), 407-437 (NSSV…LSEK), 438-472 (NLVS…ELGV), 473-507 (SAFT…GLSC), 508-538 (NQPV…MENR), 539-573 (NVIS…GVKP), 574-609 (NEVT…KIKP), and 610-640 (KMEH…MPFQ). The segment at 645–720 (VWRTFLGACR…EGGCSWIEVG (76 aa)) is type E motif. Residues 721 to 751 (DKIHKFYVGDTAHPNAHQIYDELDRLITEIK) are type E(+) motif. Residues 752–850 (RCGYVPDTDL…DGKCSCNDYW (99 aa)) form a type DYW motif region.

This sequence belongs to the PPR family. PCMP-H subfamily.

It localises to the plastid. It is found in the chloroplast. In terms of biological role, may play a role in embryogenesis. This is Pentatricopeptide repeat-containing protein At3g49170, chloroplastic (EMB2261) from Arabidopsis thaliana (Mouse-ear cress).